The primary structure comprises 208 residues: Uracil phosphoribosyltransferase (208 aa).

5-phospho-alpha-D-ribose 1-diphosphate contacts are provided by residues Arg78, Arg103, and 130–138 (DPMLATGGS). Uracil contacts are provided by residues Ile193 and 198 to 200 (GDA). Asp199 contributes to the 5-phospho-alpha-D-ribose 1-diphosphate binding site.

Belongs to the UPRTase family. It depends on Mg(2+) as a cofactor.

The enzyme catalyses UMP + diphosphate = 5-phospho-alpha-D-ribose 1-diphosphate + uracil. It participates in pyrimidine metabolism; UMP biosynthesis via salvage pathway; UMP from uracil: step 1/1. With respect to regulation, allosterically activated by GTP. In terms of biological role, catalyzes the conversion of uracil and 5-phospho-alpha-D-ribose 1-diphosphate (PRPP) to UMP and diphosphate. In Shewanella sediminis (strain HAW-EB3), this protein is Uracil phosphoribosyltransferase.